A 351-amino-acid chain; its full sequence is Fe-S cluster assembly protein DRE2 (351 aa).

An N-terminal SAM-like domain region spans residues 1–151 (MATTGRVLLL…KPDIGAQQAI (151 aa)). A disordered region spans residues 93-118 (RNRENKPWGLSDGNGNNANSSRRYND). Residues 105 to 114 (GNGNNANSSR) show a composition bias toward polar residues. The tract at residues 152–243 (PLKLGRRRKE…EDELLDEDDM (92 aa)) is linker. Positions 253, 264, 267, and 269 each coordinate [2Fe-2S] cluster. The interval 253–269 (CRPKPGKRRRACKDCSC) is fe-S binding site A. The [4Fe-4S] cluster site is built by Cys314, Cys317, Cys325, and Cys328. 2 consecutive short sequence motifs (cx2C motif) follow at residues 314–317 (CGNC) and 325–328 (CDGC). The fe-S binding site B stretch occupies residues 314–328 (CGNCSLGDAFRCDGC).

Belongs to the anamorsin family. Monomer. Interacts with TAH18. Interacts with MIA40. The cofactor is [2Fe-2S] cluster. It depends on [4Fe-4S] cluster as a cofactor.

The protein localises to the cytoplasm. It localises to the mitochondrion intermembrane space. Component of the cytosolic iron-sulfur (Fe-S) protein assembly (CIA) machinery required for the maturation of extramitochondrial Fe-S proteins. Part of an electron transfer chain functioning in an early step of cytosolic Fe-S biogenesis, facilitating the de novo assembly of a [4Fe-4S] cluster on the scaffold complex CFD1-NBP35. Electrons are transferred to DRE2 from NADPH via the FAD- and FMN-containing protein TAH18. TAH18-DRE2 are also required for the assembly of the diferric tyrosyl radical cofactor of ribonucleotide reductase (RNR), probably by providing electrons for reduction during radical cofactor maturation in the catalytic small subunit RNR2. This is Fe-S cluster assembly protein DRE2 from Ajellomyces capsulatus (strain H143) (Darling's disease fungus).